Consider the following 307-residue polypeptide: Stage III sporulation protein AA (307 aa).

ATP is bound at residue 143–150 (GPPQTGKT).

The chain is Stage III sporulation protein AA (spoIIIAA) from Bacillus subtilis (strain 168).